We begin with the raw amino-acid sequence, 230 residues long: MQESQYKEKAIIGTGLITTSIGGFFFLRRFRRISNASTIPKNYLNNSTVENRKYKTMFGYVTRVGDGDNFRFYHTPGGRLLGWHWLRKVPCSRSDLSNETISVRLAGIDAPESAHFGKQEQPYALEAKEFLHNKLYHKSVRIIPLKIDRYARLVAGVQYYPIPHFFWKKDIGPQMIRKGLAVVYEGSDGVFCPTKKECLLALEIVAKKKKLSLWSQGKKLILPSVYKRGV.

A helical transmembrane segment spans residues 10-27; that stretch reads AIIGTGLITTSIGGFFFL. Positions 55–216 constitute a TNase-like domain; sequence KTMFGYVTRV…KKKKLSLWSQ (162 aa). The active site involves Arg104. Position 109 (Asp109) interacts with Ca(2+). Catalysis depends on residues Glu112 and Arg152.

Belongs to the LCL3 family.

The protein resides in the mitochondrion. The protein localises to the membrane. This Schizosaccharomyces pombe (strain 972 / ATCC 24843) (Fission yeast) protein is Probable endonuclease C19F8.04c.